A 357-amino-acid chain; its full sequence is Holliday junction branch migration complex subunit RuvB (357 aa).

Residues 1–15 show a composition bias toward low complexity; it reads MAIQSDSLSSLPDSP. A disordered region spans residues 1–30; it reads MAIQSDSLSSLPDSPRIVAPQPVSPNEESI. Residues 13-195 form a large ATPase domain (RuvB-L) region; that stretch reads DSPRIVAPQP…FGIVSRLEFY (183 aa). ATP contacts are provided by residues L34, R35, G76, K79, T80, T81, 142–144, R185, Y195, and R232; that span reads EDF. Residue T80 coordinates Mg(2+). The small ATPAse domain (RuvB-S) stretch occupies residues 196-266; it reads NTDELARIVT…AAGRALAMLD (71 aa). Residues 269–357 are head domain (RuvB-H); the sequence is PQGLDVMDRK…SGGTGELFSK (89 aa). Residues R305, R324, and R329 each contribute to the DNA site.

It belongs to the RuvB family. In terms of assembly, homohexamer. Forms an RuvA(8)-RuvB(12)-Holliday junction (HJ) complex. HJ DNA is sandwiched between 2 RuvA tetramers; dsDNA enters through RuvA and exits via RuvB. An RuvB hexamer assembles on each DNA strand where it exits the tetramer. Each RuvB hexamer is contacted by two RuvA subunits (via domain III) on 2 adjacent RuvB subunits; this complex drives branch migration. In the full resolvosome a probable DNA-RuvA(4)-RuvB(12)-RuvC(2) complex forms which resolves the HJ.

It is found in the cytoplasm. The enzyme catalyses ATP + H2O = ADP + phosphate + H(+). In terms of biological role, the RuvA-RuvB-RuvC complex processes Holliday junction (HJ) DNA during genetic recombination and DNA repair, while the RuvA-RuvB complex plays an important role in the rescue of blocked DNA replication forks via replication fork reversal (RFR). RuvA specifically binds to HJ cruciform DNA, conferring on it an open structure. The RuvB hexamer acts as an ATP-dependent pump, pulling dsDNA into and through the RuvAB complex. RuvB forms 2 homohexamers on either side of HJ DNA bound by 1 or 2 RuvA tetramers; 4 subunits per hexamer contact DNA at a time. Coordinated motions by a converter formed by DNA-disengaged RuvB subunits stimulates ATP hydrolysis and nucleotide exchange. Immobilization of the converter enables RuvB to convert the ATP-contained energy into a lever motion, pulling 2 nucleotides of DNA out of the RuvA tetramer per ATP hydrolyzed, thus driving DNA branch migration. The RuvB motors rotate together with the DNA substrate, which together with the progressing nucleotide cycle form the mechanistic basis for DNA recombination by continuous HJ branch migration. Branch migration allows RuvC to scan DNA until it finds its consensus sequence, where it cleaves and resolves cruciform DNA. This chain is Holliday junction branch migration complex subunit RuvB, found in Bordetella pertussis (strain Tohama I / ATCC BAA-589 / NCTC 13251).